The primary structure comprises 363 residues: NADH-quinone oxidoreductase subunit H (363 aa).

10 consecutive transmembrane segments (helical) span residues 29-49 (VLKILMIAIPLIVSVAFYVVW), 62-82 (GPMYVGMGLFQAFADVFKLLF), 94-114 (VIFVIAPLLTLAPSFAAWAVV), 127-147 (VGLLYLLAMTSLGVYGIILAG), 166-186 (VVSYEIAMGFALVGVMIAAGS), 202-222 (FFDWFLIPLFPLFIVYWVSGV), 239-257 (IVAGHMVEYSGSVFALFFL), 264-286 (ILVSFLISIFFLGGWLSPIQGWV), 293-313 (LIDWVWNGGWPWLLLKVLFFA), and 339-359 (FIPLTIVWIAVTALMVFSGVI).

Belongs to the complex I subunit 1 family. As to quaternary structure, NDH-1 is composed of 14 different subunits. Subunits NuoA, H, J, K, L, M, N constitute the membrane sector of the complex.

The protein resides in the cell inner membrane. It carries out the reaction a quinone + NADH + 5 H(+)(in) = a quinol + NAD(+) + 4 H(+)(out). In terms of biological role, NDH-1 shuttles electrons from NADH, via FMN and iron-sulfur (Fe-S) centers, to quinones in the respiratory chain. The immediate electron acceptor for the enzyme in this species is believed to be ubiquinone. Couples the redox reaction to proton translocation (for every two electrons transferred, four hydrogen ions are translocated across the cytoplasmic membrane), and thus conserves the redox energy in a proton gradient. This subunit may bind ubiquinone. In Xylella fastidiosa (strain M12), this protein is NADH-quinone oxidoreductase subunit H.